The following is a 163-amino-acid chain: Nucleotide-binding protein Dde_2479 (163 aa).

Belongs to the YajQ family.

Its function is as follows. Nucleotide-binding protein. This chain is Nucleotide-binding protein Dde_2479, found in Oleidesulfovibrio alaskensis (strain ATCC BAA-1058 / DSM 17464 / G20) (Desulfovibrio alaskensis).